We begin with the raw amino-acid sequence, 248 residues long: D-xylose 1-dehydrogenase (248 aa).

Positions 42, 68, 91, 156, 160, 189, and 191 each coordinate NAD(+). Y156 (proton acceptor) is an active-site residue.

It belongs to the short-chain dehydrogenases/reductases (SDR) family.

It catalyses the reaction D-xylose + NAD(+) = D-xylono-1,5-lactone + NADH + H(+). Its function is as follows. Involved in the degradation of D-xylose. Catalyzes the initial reaction in the xylose utilization pathway by oxydizing D-xylose into D-xylonolactone. Shows some activity with L-arabinose and D-lyxose, but D-xylose is clearly the best substrate. Has no activity with D-ribose, D-glucose, D-galactose or D-mannose. In Caulobacter vibrioides (strain ATCC 19089 / CIP 103742 / CB 15) (Caulobacter crescentus), this protein is D-xylose 1-dehydrogenase.